The chain runs to 293 residues: AKT-interacting protein (293 aa).

A compositionally biased stretch (polar residues) spans 1–11 (MNPFWSMSTSS). The disordered stretch occupies residues 1–63 (MNPFWSMSTS…TSPAPAAQST (63 aa)). Residues 14 to 23 (KRSEGEEKTL) are compositionally biased toward basic and acidic residues. S30 bears the Phosphoserine mark. Positions 74–222 (YLEYSLLAEF…VVDSVQVCTA (149 aa)) constitute a UBC core domain. A compositionally biased stretch (basic and acidic residues) spans 253–265 (MLTQKKKPEEQHN). A disordered region spans residues 253–293 (MLTQKKKPEEQHNKSVHVAGLSWVKPGSVQPFSKEEKTVAT).

It belongs to the ubiquitin-conjugating enzyme family. FTS subfamily. In terms of assembly, component of the FTS/Hook/FHIP complex (FHF complex), composed of AKTIP/FTS, FHIP1B, and one or more members of the Hook family of proteins HOOK1, HOOK2, and HOOK3. Interacts directly with HOOK1, HOOK2 and HOOK3. The FHF complex associates with the homotypic vesicular sorting complex (the HOPS complex). Also interacts with AKT1. May interact with FHIP1A.

The protein localises to the cytoplasm. It is found in the cell membrane. Its function is as follows. Component of the FTS/Hook/FHIP complex (FHF complex). The FHF complex may function to promote vesicle trafficking and/or fusion via the homotypic vesicular protein sorting complex (the HOPS complex). Regulates apoptosis by enhancing phosphorylation and activation of AKT1. Increases release of TNFSF6 via the AKT1/GSK3B/NFATC1 signaling cascade. FHF complex promotes the distribution of AP-4 complex to the perinuclear area of the cell. The chain is AKT-interacting protein (AKTIP) from Pongo abelii (Sumatran orangutan).